The sequence spans 294 residues: 4-diphosphocytidyl-2-C-methyl-D-erythritol kinase (294 aa).

The active site involves Lys23. ATP is bound at residue 106–116 (PMGGGLGGGSS). Residue Asp148 is part of the active site.

This sequence belongs to the GHMP kinase family. IspE subfamily.

It catalyses the reaction 4-CDP-2-C-methyl-D-erythritol + ATP = 4-CDP-2-C-methyl-D-erythritol 2-phosphate + ADP + H(+). It participates in isoprenoid biosynthesis; isopentenyl diphosphate biosynthesis via DXP pathway; isopentenyl diphosphate from 1-deoxy-D-xylulose 5-phosphate: step 3/6. Its function is as follows. Catalyzes the phosphorylation of the position 2 hydroxy group of 4-diphosphocytidyl-2C-methyl-D-erythritol. The polypeptide is 4-diphosphocytidyl-2-C-methyl-D-erythritol kinase (Nitrosospira multiformis (strain ATCC 25196 / NCIMB 11849 / C 71)).